We begin with the raw amino-acid sequence, 511 residues long: MIWHVQNENFILDSTRIFMKAFHLLLFHGSFIFPECILIFGLILLLMIDSTSDQKDIPWLYFISSTSLVMSIAALLFRWREEPMISFSGNFQTNNFNEIFQFLILLCSTLCIPLSVEYIECTEMAITEFLLFVLTATLGGMFLCGANDLITIFVAPECFSLCSYLLSGYTKRDVRSNEATTKYLLMGGASSSILVHGFSWLYGSSGGEIELQEIVNGLINTQMYNSPGISIALIFITVGIGFKLSPAPSHQWTPDVYEGSPTPVVAFLSVTSKVAASALATRIFDIPFYFSSNEWHLLLEILAILSMILGNLIAITQTSMKRMLAYSSIGQIGYVIIGIIVGDSNDGYASMITYMLFYISMNLGTFACIVLFGLRTGTDNIRDYAGLYTKDPFLALSLALCLLSLGGLPPLAGFFGKLHLFWCGWQAGLYFLVSIGLLTSVVSIYYYLKIIKLLMTGRNQEITPHVRNYRRSPLRSNNSIELSMIVCVIASTIPGISMNPIIAIAQDTLFF.

A run of 13 helical transmembrane segments spans residues Leu24–Leu44, Ile57–Phe77, Ile99–Ile119, Met124–Cys144, Leu149–Tyr169, Tyr183–Gly203, Pro227–Ala247, Trp295–Ile315, Met323–Asp343, Tyr354–Leu374, Ala395–Phe415, Leu418–Leu438, and Met484–Ile504.

It belongs to the complex I subunit 2 family. In terms of assembly, NDH is composed of at least 16 different subunits, 5 of which are encoded in the nucleus.

The protein localises to the plastid. Its subcellular location is the chloroplast thylakoid membrane. It carries out the reaction a plastoquinone + NADH + (n+1) H(+)(in) = a plastoquinol + NAD(+) + n H(+)(out). It catalyses the reaction a plastoquinone + NADPH + (n+1) H(+)(in) = a plastoquinol + NADP(+) + n H(+)(out). NDH shuttles electrons from NAD(P)H:plastoquinone, via FMN and iron-sulfur (Fe-S) centers, to quinones in the photosynthetic chain and possibly in a chloroplast respiratory chain. The immediate electron acceptor for the enzyme in this species is believed to be plastoquinone. Couples the redox reaction to proton translocation, and thus conserves the redox energy in a proton gradient. The sequence is that of NAD(P)H-quinone oxidoreductase subunit 2 B, chloroplastic from Nandina domestica (Heavenly bamboo).